We begin with the raw amino-acid sequence, 378 residues long: Stimulator of interferon genes protein (378 aa).

At 1–17 (MPYSSLHPSIPQPRGLR) the chain is on the cytoplasmic side. The tract at residues 1 to 190 (MPYSSLHPSI…AYNQRHKNVL (190 aa)) is mediates interaction with ZDHHC1 and ZDHHC11. A helical membrane pass occupies residues 18–34 (AQVAALVLLGACLVALW). The Lumenal segment spans residues 35–44 (GLGELPEYTL). A helical membrane pass occupies residues 45 to 69 (RWLVLHLASQQIGLLVKGLCSLAEE). Topologically, residues 70-91 (LCHVHSRYQSSYWRAARACLGC) are cytoplasmic. S-palmitoyl cysteine attachment occurs at residues Cys88 and Cys91. The chain crosses the membrane as a helical span at residues 92–106 (PIRCGALLLLSCYFY). The Lumenal portion of the chain corresponds to 107 to 116 (FSIRDKAGLP). The chain crosses the membrane as a helical span at residues 117–134 (LPWMLALLGLSQALNILL). Residues 135-378 (GLQHLAPAEV…QPLPLRSDIF (244 aa)) are Cytoplasmic-facing. Residue Lys150 forms a Glycyl lysine isopeptide (Lys-Gly) (interchain with G-Cter in ubiquitin) linkage. Residues 153–339 (FNVAHGLAWS…LRHLRQEERE (187 aa)) form a cyclic dinucleotide-binding domain (CBD) region. Positions 162 and 167 each coordinate 2',3'-cGAMP. 2 residues coordinate 3',3'-c-di-GMP: Ser162 and Tyr167. Tyr167 serves as a coordination point for 2',3'-cUAMP. Residue Lys236 forms a Glycyl lysine isopeptide (Lys-Gly) (interchain with G-Cter in ubiquitin) linkage. 2 residues coordinate 2',3'-cGAMP: Arg238 and Thr263. Residues Arg238 and Thr263 each coordinate 2',3'-cUAMP. Residues 238-241 (RVYT) and Thr263 each bind 3',3'-c-di-GMP. The C-terminal tail (CTT) stretch occupies residues 339-378 (EVTMGSAETSVVPTSSTLSQEPELLISGMEQPLPLRSDIF). Residue Ser354 is modified to Phosphoserine. The residue at position 355 (Thr355) is a Phosphothreonine. Ser357 and Ser365 each carry phosphoserine; by TBK1. Residues 362 to 365 (LLIS) carry the pLxIS motif motif.

The protein belongs to the STING family. As to quaternary structure, homodimer; forms a homodimer in absence of cyclic nucleotide (c-di-GMP or cGAMP); 'Lys-63'-linked ubiquitination at Lys-150 is required for homodimerization. Homotetramer; in presence of cyclic nucleotide (c-di-GMP or cGAMP), forms tetramers and higher-order oligomers through side-by-side packing. Interacts (when phosphorylated) with IRF3; following activation and phosphorylation on the pLxIS motif by TBK1, recruits IRF3. Interacts with DDX58/RIG-I, MAVS and SSR2. Interacts with RNF5 and TRIM56. Interacts with TBK1; when homodimer, leading to subsequent production of IFN-beta. Interacts with IFIT1 and IFIT2. Interacts with TRIM29; this interaction induces STING1 ubiquitination and subsequent degradation. Associates with the MHC-II complex. Interacts with STEEP1; interaction takes place upon cGAMP-activation and STING1 phosphorylation by MAP3K7/TAK1 and promotes STING1 translocation to COPII vesicles. Interacts with SEC24A, SEC24B and SEC24C; promoting translocation to COPII vesicles. Interacts (when ubiquitinated) with SQSTM1; leading to relocalization to autophagosomes. Interacts with SURF4. Interacts with HNRNPA2B1. Interacts with ZDHHC1; ZDHHC1 constitutively interacts with STING1 and in presence of DNA viruses activates it by promoting its cGAMP-induced oligomerization and the recruitment of downstream signaling components. Interacts with ZDHHC11; in presence of DNA viruses promotes the recruitment of IRF3 to STING1. Interacts with TOMM70. Interacts with TAB1; promoting recruitment of TAB1 to the endoplasmic reticulum membrane and subsequent activation of MAP3K7/TAK1. Interacts (via transmembrane domain) with TMEM203. Interacts with DDX41. (Microbial infection) Interacts with African swine fever virus/ASFV protein A528R; this interaction mediates STING1 degradation. In terms of assembly, (Microbial infection) Interacts with African swine fever virus/ASFV minor capsid protein p17. As to quaternary structure, (Microbial infection) Interacts with Pseudorabies virus protein UL13; this interaction mediates STING1 degradation in a RNF5-dependent manner. In terms of processing, phosphorylation by TBK1 leads to activation and production of IFN-beta. Following cyclic nucleotide (c-di-GMP or cGAMP)-binding, activation and translocation from the endoplasmic reticulum, STING1 is phosphorylated by TBK1 at Ser-365 in the pLxIS motif. The phosphorylated pLxIS motif constitutes an IRF3-binding motif, leading to recruitment of the transcription factor IRF3 to induce type-I interferons and other cytokines. Phosphorylated on tyrosine residues upon MHC-II aggregation. Dephosphorylation by PPP6C leads to inactivation and decreased production of IFN-beta. Phosphorylation at Ser-357 is also required to activate IRF3. Phosphorylation at Ser-354 by MAP3K7/TAK1 facilitates its interaction with STEEP1, promoting STING1 translocation to COPII vesicles. Post-translationally, ubiquitinated. Ubiquitinated via 'Lys-63'-linked ubiquitin chains in response to double-stranded DNA treatment, leading to relocalization to autophagosomes and subsequent degradation; this process is dependent on SQSTM1. 'Lys-63'-linked ubiquitination mediated by TRIM56 at Lys-150 promotes homodimerization and recruitment of the antiviral kinase TBK1 and subsequent production of IFN-beta. 'Lys-48'-linked polyubiquitination at Lys-150 occurring after viral infection is mediated by RNF5 and leads to proteasomal degradation. 'Lys-11'-linked polyubiquitination at Lys-150 by RNF26 leads to stabilize STING1: it protects STING1 from RNF5-mediated 'Lys-48'-linked polyubiquitination. 'Lys-33'-linked and 'Lys-48'-linked deubiquitinated by USP20; leading to its stabilization and promotion of innate antiviral response. 'Lys-48'-linked deubiquitinated by USP44; leading to its stabilization and promotion of innate antiviral response. Deubiquitinated by USP13; leading to inhibition of innate antiviral response. 'Lys-63'-linked deubiquitinated by USP49; leading to inhibition of the subsequent recruitment of TBK1 to the signaling complex. 'Lys-63'-linked ubiquitination mediated by RNF39 promotes the activation of the cGAS-STING pathway. Palmitoylation takes place in the Golgi apparatus and creates a platform for the recruitment of TBK1. In terms of tissue distribution, expressed at higher level in the spleen, lymph node, lung and bone marrow, followed by the small intestine, heart, liver and brain, and to a lesser extent in the stomach and kidney.

It is found in the endoplasmic reticulum membrane. The protein localises to the cytoplasm. The protein resides in the perinuclear region. Its subcellular location is the endoplasmic reticulum-Golgi intermediate compartment membrane. It localises to the golgi apparatus membrane. It is found in the cytoplasmic vesicle. The protein localises to the autophagosome membrane. The protein resides in the mitochondrion outer membrane. Its subcellular location is the cell membrane. The catalysed reaction is H(+)(in) = H(+)(out). Its function is as follows. Facilitator of innate immune signaling that acts as a sensor of cytosolic DNA from bacteria and viruses and promotes the production of type I interferon (IFN-alpha and IFN-beta). Innate immune response is triggered in response to non-CpG double-stranded DNA from viruses and bacteria delivered to the cytoplasm. Acts by binding cyclic dinucleotides: recognizes and binds cyclic di-GMP (c-di-GMP), a second messenger produced by bacteria, cyclic UMP-AMP (2',3'-cUAMP), and cyclic GMP-AMP (cGAMP), a messenger produced by CGAS in response to DNA virus in the cytosol. Upon binding to c-di-GMP, cUAMP or cGAMP, STING1 oligomerizes, translocates from the endoplasmic reticulum and is phosphorylated by TBK1 on the pLxIS motif, leading to recruitment and subsequent activation of the transcription factor IRF3 to induce expression of type I interferon and exert a potent anti-viral state. Exhibits 2',3' phosphodiester linkage-specific ligand recognition: can bind both 2'-3' linked cGAMP (2'-3'-cGAMP) and 3'-3' linked cGAMP but is preferentially activated by 2'-3' linked cGAMP. The preference for 2'-3'-cGAMP, compared to other linkage isomers is probably due to the ligand itself, whichs adopts an organized free-ligand conformation that resembles the STING1-bound conformation and pays low energy costs in changing into the active conformation. In addition to promote the production of type I interferons, plays a direct role in autophagy. Following cGAMP-binding, STING1 buds from the endoplasmic reticulum into COPII vesicles, which then form the endoplasmic reticulum-Golgi intermediate compartment (ERGIC). The ERGIC serves as the membrane source for WIPI2 recruitment and LC3 lipidation, leading to formation of autophagosomes that target cytosolic DNA or DNA viruses for degradation by the lysosome. Promotes autophagy by acting as a proton channel that directs proton efflux from the Golgi to facilitate MAP1LC3B/LC3B lipidation. The autophagy- and interferon-inducing activities can be uncoupled and autophagy induction is independent of TBK1 phosphorylation. Autophagy is also triggered upon infection by bacteria: following c-di-GMP-binding, which is produced by live Gram-positive bacteria, promotes reticulophagy. May be involved in translocon function, the translocon possibly being able to influence the induction of type I interferons. May be involved in transduction of apoptotic signals via its association with the major histocompatibility complex class II (MHC-II). This chain is Stimulator of interferon genes protein, found in Sus scrofa (Pig).